Consider the following 299-residue polypeptide: CCR4-NOT transcription complex subunit 9 (299 aa).

Met-1 carries the N-acetylmethionine modification.

This sequence belongs to the CNOT9 family. In terms of assembly, homodimer. Component of the CCR4-NOT complex; distinct complexes seem to exist that differ in the participation of probably mutually exclusive catalytic subunits. Interacts with MYB, ATF2, RARA, RARB, RARG, RXRA, RXRB and RXRG. Identified in a complex with ATF2 bound to target DNA. Interacts with NANOS2. Directly interacts with ZNF335. Detected in spleen, thymus, prostate, testis, ovary and intestine.

It is found in the nucleus. Its subcellular location is the cytoplasm. The protein localises to the P-body. Functionally, component of the CCR4-NOT complex which is one of the major cellular mRNA deadenylases and is linked to various cellular processes including bulk mRNA degradation, miRNA-mediated repression, translational repression during translational initiation and general transcription regulation. Additional complex functions may be a consequence of its influence on mRNA expression. Involved in down-regulation of MYB- and JUN-dependent transcription. May play a role in cell differentiation. Can bind oligonucleotides, such as poly-G, poly-C or poly-T (in vitro), but the physiological relevance of this is not certain. Does not bind poly-A. Enhances ligand-dependent transcriptional activity of nuclear hormone receptors, including RARA, expect ESR1-mediated transcription that is not only slightly increased, if at all. This Homo sapiens (Human) protein is CCR4-NOT transcription complex subunit 9.